We begin with the raw amino-acid sequence, 178 residues long: Caveolin-1 (178 aa).

Position 2 is an N-acetylserine (S2). Position 2 is a phosphoserine (S2). The interval 2–94 is required for homooligomerization; the sequence is SGGKYVDSEG…WKASFTTFTV (93 aa). The Cytoplasmic portion of the chain corresponds to 2-104; sequence SGGKYVDSEG…TKYWFYRLLS (103 aa). K5 carries the N6-acetyllysine; alternate modification. K5 is covalently cross-linked (Glycyl lysine isopeptide (Lys-Gly) (interchain with G-Cter in ubiquitin); alternate). Residue Y6 is modified to Phosphotyrosine. Residue S9 is modified to Phosphoserine. Y14 bears the Phosphotyrosine; by ABL1 mark. Y25 carries the phosphotyrosine modification. Residues K26, K39, K47, and K57 each participate in a glycyl lysine isopeptide (Lys-Gly) (interchain with G-Cter in ubiquitin) cross-link. The segment at 82-94 is interaction with CAVIN3; that stretch reads DGIWKASFTTFTV. The segment at residues 105–125 is an intramembrane region (helical); that stretch reads ALFGIPMALIWGIYFAILSFL. At 126–178 the chain is on the cytoplasmic side; the sequence is HIWAVVPCIKSFLIEIQCISRVYSIYVHTFCDPLFEAIGKIFSSIRINMQKEI. The tract at residues 131–142 is interacts with SPRY1, SPRY2, SPRY3 and SPRY4; the sequence is VPCIKSFLIEIQ. Residues C133, C143, and C156 are each lipidated (S-palmitoyl cysteine). Residues 149-160 are interacts with SPRY1, SPRY2, and SPRY4; the sequence is SIYVHTFCDPLF. Residues 167 to 178 form an interacts with SPRY1, SPRY2, SPRY3 and SPRY4 region; the sequence is FSSIRINMQKEI.

This sequence belongs to the caveolin family. Homooligomer. Interacts with GLIPR2. Interacts with NOSTRIN. Interacts with SNAP25 and STX1A. Interacts (via the N-terminus) with DPP4; the interaction is direct. Interacts with CTNNB1, CDH1 and JUP. Interacts with PACSIN2; this interaction induces membrane tubulation. Interacts with SLC7A9. Interacts with BMX and BTK. Interacts with TGFBR1. Interacts with CAVIN3 (via leucine-zipper domain) in a cholesterol-sensitive manner. Interacts with CAVIN1. Interacts with EHD2 in a cholesterol-dependent manner. Forms a ternary complex with UBXN6 and VCP; mediates CAV1 targeting to lysosomes for degradation. Interacts with ABCG1; this interaction regulates ABCG1-mediated cholesterol efflux. Interacts with NEU3; this interaction enhances NEU3 sialidase activity within caveola. Interacts (via C-terminus) with SPRY1, SPRY2 (via C-terminus), SPRY3, and SPRY4. Interacts with IGFBP5; this interaction allows trafficking of IGFBP5 from the plasma membrane to the nucleus. Post-translationally, phosphorylated at Tyr-14 by ABL1 in response to oxidative stress. Ubiquitinated. Undergo monoubiquitination and multi- and/or polyubiquitination. Monoubiquitination of N-terminal lysines promotes integration in a ternary complex with UBXN6 and VCP which promotes oligomeric CAV1 targeting to lysosomes for degradation. Ubiquitinated by ZNRF1; leading to degradation and modulation of the TLR4-mediated immune response.

The protein localises to the golgi apparatus membrane. It is found in the cell membrane. It localises to the membrane. Its subcellular location is the caveola. The protein resides in the membrane raft. May act as a scaffolding protein within caveolar membranes. Forms a stable heterooligomeric complex with CAV2 that targets to lipid rafts and drives caveolae formation. Mediates the recruitment of CAVIN proteins (CAVIN1/2/3/4) to the caveolae. Interacts directly with G-protein alpha subunits and can functionally regulate their activity. Involved in the costimulatory signal essential for T-cell receptor (TCR)-mediated T-cell activation. Its binding to DPP4 induces T-cell proliferation and NF-kappa-B activation in a T-cell receptor/CD3-dependent manner. Recruits CTNNB1 to caveolar membranes and may regulate CTNNB1-mediated signaling through the Wnt pathway. Negatively regulates TGFB1-mediated activation of SMAD2/3 by mediating the internalization of TGFBR1 from membrane rafts leading to its subsequent degradation. Binds 20(S)-hydroxycholesterol (20(S)-OHC). The protein is Caveolin-1 (CAV1) of Loxodonta africana (African elephant).